The following is an 860-amino-acid chain: DNA mismatch repair protein MutS (860 aa).

An ATP-binding site is contributed by 607 to 614; sequence GPNMSGKS.

It belongs to the DNA mismatch repair MutS family.

Functionally, this protein is involved in the repair of mismatches in DNA. It is possible that it carries out the mismatch recognition step. This protein has a weak ATPase activity. The protein is DNA mismatch repair protein MutS of Listeria innocua serovar 6a (strain ATCC BAA-680 / CLIP 11262).